We begin with the raw amino-acid sequence, 978 residues long: Glycine dehydrogenase (decarboxylating) (978 aa).

Lys726 is modified (N6-(pyridoxal phosphate)lysine).

The protein belongs to the GcvP family. In terms of assembly, the glycine cleavage system is composed of four proteins: P, T, L and H. Pyridoxal 5'-phosphate serves as cofactor.

It catalyses the reaction N(6)-[(R)-lipoyl]-L-lysyl-[glycine-cleavage complex H protein] + glycine + H(+) = N(6)-[(R)-S(8)-aminomethyldihydrolipoyl]-L-lysyl-[glycine-cleavage complex H protein] + CO2. Functionally, the glycine cleavage system catalyzes the degradation of glycine. The P protein binds the alpha-amino group of glycine through its pyridoxal phosphate cofactor; CO(2) is released and the remaining methylamine moiety is then transferred to the lipoamide cofactor of the H protein. This chain is Glycine dehydrogenase (decarboxylating), found in Paraburkholderia xenovorans (strain LB400).